We begin with the raw amino-acid sequence, 648 residues long: Protein associated with UVRAG as autophagy enhancer (648 aa).

Polar residues-rich tracts occupy residues glutamine 131–serine 146 and proline 157–arginine 173. The tract at residues glutamine 131–arginine 173 is disordered. Serine 144 carries the phosphoserine modification. The interval glutamate 183–glutamate 222 is interaction with UVRAG. 5 positions are modified to N6-acetyllysine: lysine 469, lysine 509, lysine 519, lysine 559, and lysine 619.

In terms of assembly, interacts with UVRAG; the interaction is direct and promotes association with the PI3K/PI3KC3 and HOPS complexes. Interacts with STX17. In terms of processing, phosphorylated by MTOR at Ser-144 under nutrient-rich conditions. Phosphorylation prevents acetylation by KAT5/TIP60 and impairs RUBCNL/PACER function and autophagosome maturation. Under autophagy induction, Phosphorylation by MTOR is repressed, enabling acetylation by KAT5/TIP60. Acetylated by KAT5/TIP60 under autophagy induction, promoting autophagosome maturation and lipid metabolism. Acetylation is prevented by phosphorylation by MTOR. Lys-469 and Lys-559 constitute the key sites for tuning function in autophagy.

The protein localises to the cytoplasmic vesicle. Its subcellular location is the autophagosome membrane. Functionally, regulator of autophagy that promotes autophagosome maturation by facilitating the biogenesis of phosphatidylinositol 3-phosphate (PtdIns(3)P) in late steps of autophagy. Acts by antagonizing RUBCN, thereby stimulating phosphatidylinositol 3-kinase activity of the PI3K/PI3KC3 complex. Following anchorage to the autophagosomal SNARE STX17, promotes the recruitment of PI3K/PI3KC3 and HOPS complexes to the autophagosome to regulate the fusion specificity of autophagosomes with late endosomes/lysosomes. Binds phosphoinositides phosphatidylinositol 3-phosphate (PtdIns(3)P), 4-phosphate (PtdIns(4)P) and 5-phosphate (PtdIns(5)P). In addition to its role in autophagy, acts as a regulator of lipid and glycogen homeostasis. May act as a tumor suppressor. The sequence is that of Protein associated with UVRAG as autophagy enhancer from Mus musculus (Mouse).